Consider the following 267-residue polypeptide: uncharacterized protein (267 aa).

The region spanning 17–248 (LKVENLTKIF…PRDRTSIEFL (232 aa)) is the ABC transporter domain. 53 to 60 (GPSGCGKT) is an ATP binding site.

Belongs to the ABC transporter superfamily.

This is an uncharacterized protein from Methanocaldococcus jannaschii (strain ATCC 43067 / DSM 2661 / JAL-1 / JCM 10045 / NBRC 100440) (Methanococcus jannaschii).